A 191-amino-acid polypeptide reads, in one-letter code: Protein Ves (191 aa).

It belongs to the Ves family.

The protein is Protein Ves of Escherichia coli (strain K12 / MC4100 / BW2952).